Consider the following 249-residue polypeptide: Microvitellogenin (249 aa).

The signal sequence occupies residues 1–17; it reads MLRTTVVLLTLAAIAFA.

Its function is as follows. Small vitellogenic protein found in females. It is synthesized in the fat body, secreted into the hemolymph, and taken up by developing oocytes. The polypeptide is Microvitellogenin (MVG) (Manduca sexta (Tobacco hawkmoth)).